Consider the following 588-residue polypeptide: Nuclear hormone receptor family member nhr-23 (588 aa).

The interval 50 to 73 (LHAKSSLQPSLSIETPKSKENDES) is disordered. The segment covering 52-64 (AKSSLQPSLSIET) has biased composition (polar residues). The nuclear receptor DNA-binding region spans 160–235 (VIPCKVCGDK…LGMSRDAVKF (76 aa)). NR C4-type zinc fingers lie at residues 163–183 (CKVCGDKSSGVHYGVITCEGC) and 199–223 (CPRQKNCVVDRVNRNRCQYCRLKKC). The NR LBD domain maps to 345 to 586 (PEEDVATRVI…ALYKELFTAD (242 aa)).

The protein belongs to the nuclear hormone receptor family. NR1 subfamily. As to expression, expressed in the germline and oocytes and is a maternal gene product. In males and sperm-producing hermaphrodites, expressed in early pachytene spermatocytes, increasing in level throughout late pachytene. Expression is undetectable in meiotically dividing spermatocytes or mature spermatids.

The protein resides in the nucleus. Orphan nuclear receptor. Transcription factor. Modulates expression of target genes, such as Period protein homolog lin-42 and microRNA let-7, by binding to hormone response elements (HRE). Involved in promoting oscillatory expression of the primary transcripts of let-7 and paralogous microRNAs miR-48, miR-84, and miR-241. Plays a role in normal development and required to regulate each larval molt. Involved in regulating both the frequency and number of molts, acting as part of a negative feedback loop with the let-7 family of microRNAs, perhaps contributing to a self-sustaining molecular-genetic oscillator. Positively modulates expression of collagen and hedgehog-related genes. Involved in development of the gonad and associated epidermal structures. Required in spermatogenesis, acting following the sperm/oocyte cell fate decision, downstream of the canonical sex-determination pathway. Involved in regulating formation of the sperm-specific fibrous body-membranous organelle (FB-MO) complexes, acting independently of transcription regulator spe-44. The polypeptide is Nuclear hormone receptor family member nhr-23 (Caenorhabditis elegans).